The chain runs to 3174 residues: Intermembrane lipid transfer protein VPS13A (3174 aa).

Residues 3 to 116 (FESVVVDVLN…LMEAKQQELK (114 aa)) form the Chorein N-terminal domain. 3 TPR repeats span residues 212–245 (LFAYWNVKSQMFYLSDYDNSLDDLKNGIVNENIV), 373–406 (LTSKKPPGELLVSLEELEKTLDVFNITIARQTAE), and 537–575 (IDSFHITGLPDNSEKPRLLSSLDDAMSLFQITFEINPLD). A Phosphoserine modification is found at Ser-839. An FFAT motif is present at residues 842–848 (EFFDAPC). 2 TPR repeats span residues 1256–1289 (VIDLITIKLSEMRLYRSRFINDAYQEVLDLLLPL) and 1291–1320 (LEVVVERNLCWEWYQEVPCFNVNAQLKPME). Phosphoserine is present on Ser-1416. Residues 2009-2041 (YEGDTLLGTASPENEFNIPLGSYRSFIFLKPED) form a TPR 6 repeat. One can recognise an SHR-BD domain in the interval 2209 to 2454 (VAFHSPYWMV…VFYTWADPVG (246 aa)). 3 TPR repeats span residues 2568–2601 (PMSVKHTEKLEREFKEYTESSPSEDKVIQLDTNV), 2717–2751 (LGFIYALTDLMTEAEVTENTEVELFHKDIEAFKEE), and 2860–2898 (ILGLDVLGNPFGLIREFSEGVEAFFYEPYQGAIQGPEEF). Residues 2751–3174 (EYKTASLVDQ…QEAREPSPSL (424 aa)) are required for mitochondrial localization. A required for lipid droplet localization region spans residues 2953-3027 (PAGFREGITR…SSTFQGIKRA (75 aa)). The TPR 10 repeat unit spans residues 3086–3119 (MLMITRRGVLFVTKGTFGQLTCEWQYSFDEFTKE).

It belongs to the VPS13 family. As to quaternary structure, interacts (via FFAT motif) with VAPA and VAPB. Interacts with RAB7A. Interacts with XK. Expressed in red blood cells (at protein level). Widely expressed, with high expression in brain, heart, skeletal muscle and kidney.

The protein localises to the mitochondrion outer membrane. It is found in the endoplasmic reticulum membrane. The protein resides in the endosome membrane. It localises to the lysosome membrane. Its subcellular location is the lipid droplet. The protein localises to the golgi apparatus. It is found in the cytoplasmic vesicle. The protein resides in the secretory vesicle. It localises to the neuronal dense core vesicle. Its function is as follows. Mediates the transfer of lipids between membranes at organelle contact sites. Binds phospholipids. Required for the formation or stabilization of ER-mitochondria contact sites which enable transfer of lipids between the ER and mitochondria. Negatively regulates lipid droplet size and motility. Required for efficient lysosomal protein degradation. The protein is Intermembrane lipid transfer protein VPS13A (VPS13A) of Homo sapiens (Human).